Consider the following 230-residue polypeptide: Small ribosomal subunit protein uS3 (230 aa).

The region spanning 39–107 (VRKFLVEKLQ…PAQINIAEIR (69 aa)) is the KH type-2 domain.

It belongs to the universal ribosomal protein uS3 family. In terms of assembly, part of the 30S ribosomal subunit. Forms a tight complex with proteins S10 and S14.

Its function is as follows. Binds the lower part of the 30S subunit head. Binds mRNA in the 70S ribosome, positioning it for translation. The protein is Small ribosomal subunit protein uS3 of Shewanella putrefaciens (strain CN-32 / ATCC BAA-453).